The following is a 387-amino-acid chain: Putative actin-29 (387 aa).

The protein belongs to the actin family.

Its subcellular location is the cytoplasm. It is found in the cytoskeleton. The catalysed reaction is ATP + H2O = ADP + phosphate + H(+). In terms of biological role, actins are highly conserved proteins that are involved in various types of cell motility and are ubiquitously expressed in all eukaryotic cells. Multiple isoforms are involved in various cellular functions such as cytoskeleton structure, cell mobility, chromosome movement and muscle contraction. The sequence is that of Putative actin-29 (act29) from Dictyostelium discoideum (Social amoeba).